Reading from the N-terminus, the 305-residue chain is Oxygen-dependent coproporphyrinogen-III oxidase (305 aa).

S94 contributes to the substrate binding site. A divalent metal cation-binding residues include H98 and H108. H108 functions as the Proton donor in the catalytic mechanism. Substrate is bound at residue 110–112 (NVR). Residues H147 and H177 each coordinate a divalent metal cation. The important for dimerization stretch occupies residues 242-277 (YVEFNLVYDRGTLFGLQTGGRTESILMSMPPLVRWE). 260–262 (GGR) contacts substrate.

The protein belongs to the aerobic coproporphyrinogen-III oxidase family. In terms of assembly, homodimer. A divalent metal cation serves as cofactor.

Its subcellular location is the cytoplasm. The enzyme catalyses coproporphyrinogen III + O2 + 2 H(+) = protoporphyrinogen IX + 2 CO2 + 2 H2O. It functions in the pathway porphyrin-containing compound metabolism; protoporphyrin-IX biosynthesis; protoporphyrinogen-IX from coproporphyrinogen-III (O2 route): step 1/1. Involved in the heme biosynthesis. Catalyzes the aerobic oxidative decarboxylation of propionate groups of rings A and B of coproporphyrinogen-III to yield the vinyl groups in protoporphyrinogen-IX. The chain is Oxygen-dependent coproporphyrinogen-III oxidase from Shewanella denitrificans (strain OS217 / ATCC BAA-1090 / DSM 15013).